A 502-amino-acid polypeptide reads, in one-letter code: Probable glycine dehydrogenase (decarboxylating) subunit 2 (502 aa).

Position 273 is an N6-(pyridoxal phosphate)lysine (Lys-273).

This sequence belongs to the GcvP family. C-terminal subunit subfamily. The glycine cleavage system is composed of four proteins: P, T, L and H. In this organism, the P 'protein' is a heterodimer of two subunits. Requires pyridoxal 5'-phosphate as cofactor.

It carries out the reaction N(6)-[(R)-lipoyl]-L-lysyl-[glycine-cleavage complex H protein] + glycine + H(+) = N(6)-[(R)-S(8)-aminomethyldihydrolipoyl]-L-lysyl-[glycine-cleavage complex H protein] + CO2. Functionally, the glycine cleavage system catalyzes the degradation of glycine. The P protein binds the alpha-amino group of glycine through its pyridoxal phosphate cofactor; CO(2) is released and the remaining methylamine moiety is then transferred to the lipoamide cofactor of the H protein. In Thermococcus gammatolerans (strain DSM 15229 / JCM 11827 / EJ3), this protein is Probable glycine dehydrogenase (decarboxylating) subunit 2.